The sequence spans 167 residues: Small ribosomal subunit protein uS5 (167 aa).

The S5 DRBM domain maps to 12-75 (LQEKLIAVNR…EKARRNMTTI (64 aa)).

Belongs to the universal ribosomal protein uS5 family. In terms of assembly, part of the 30S ribosomal subunit. Contacts proteins S4 and S8.

In terms of biological role, with S4 and S12 plays an important role in translational accuracy. Located at the back of the 30S subunit body where it stabilizes the conformation of the head with respect to the body. In Vibrio parahaemolyticus serotype O3:K6 (strain RIMD 2210633), this protein is Small ribosomal subunit protein uS5.